The sequence spans 310 residues: Olfactory receptor 4D1 (310 aa).

The Extracellular segment spans residues 1-25; the sequence is MEPQNTTQVSMFVLLGFSQTQELQK. N-linked (GlcNAc...) asparagine glycosylation is present at N5. A helical transmembrane segment spans residues 26–49; it reads FLFLLFLLVYVTTIVGNLLIMVTV. Residues 50–57 are Cytoplasmic-facing; the sequence is TFDCRLHT. Residues 58–79 form a helical membrane-spanning segment; it reads PMYFLLRNLALIDLCYSTVTSP. Over 80–100 the chain is Extracellular; sequence KMLVDFLHETKTISYQGCMAQ. A disulfide bridge connects residues C97 and C189. A helical membrane pass occupies residues 101 to 120; the sequence is IFFFHLLGGGTVFFLSVMAY. Over 121 to 139 the chain is Cytoplasmic; that stretch reads DRYIAISQPLRYVTIMNTQ. The helical transmembrane segment at 140 to 158 threads the bilayer; it reads LCVGLVVAAWVGGFVHSIV. The Extracellular portion of the chain corresponds to 159–195; the sequence is QLALILPLPFCGPNILDNFYCDVPQVLRLACTDTSLL. The chain crosses the membrane as a helical span at residues 196–219; it reads EFLMISNSGLLVIIWFLLLLISYT. Residues 220-235 are Cytoplasmic-facing; that stretch reads VILVMLRSHSGKARRK. The helical transmembrane segment at 236 to 258 threads the bilayer; that stretch reads AASTCTTHIIVVSMIFIPCIYIY. Residues 259-269 lie on the Extracellular side of the membrane; the sequence is TWPFTPFLMDK. Residues 270–289 traverse the membrane as a helical segment; that stretch reads AVSISYTVMTPMLNPMIYTL. The Cytoplasmic portion of the chain corresponds to 290–310; the sequence is RNQDMKAAMRRLGKCLVICRE.

This sequence belongs to the G-protein coupled receptor 1 family.

Its subcellular location is the cell membrane. Odorant receptor. This chain is Olfactory receptor 4D1 (OR4D1), found in Homo sapiens (Human).